The chain runs to 772 residues: Subtilisin-like protease SBT5.3 (772 aa).

The first 25 residues, 1 to 25 (MKLTHNFSFLLLLLLVHMSSKHILA), serve as a signal peptide directing secretion. An Inhibitor I9 domain is found at 31-116 (SYVVYFGAHS…VFPNKALKLH (86 aa)). The 509-residue stretch at 120–628 (SWDFLGLEHN…AGHVQPNLAV (509 aa)) folds into the Peptidase S8 domain. The Charge relay system role is filled by D153. The N-linked (GlcNAc...) asparagine glycan is linked to N211. The Charge relay system role is filled by H223. N-linked (GlcNAc...) asparagine glycans are attached at residues N246, N306, and N396. The PA domain occupies 398-480 (SALDAQLCKL…KDSFAVSRYI (83 aa)). S561 (charge relay system) is an active-site residue. N606, N651, N662, N684, and N725 each carry an N-linked (GlcNAc...) asparagine glycan.

Belongs to the peptidase S8 family. As to expression, expressed specifically at sites of lateral root emergence.

It is found in the secreted. The protein localises to the cell wall. Functionally, serine protease. Has a substrate preference for the hydrophobic residues Phe and Ala and the basic residue Asp in the P1 position, and for Asp, Leu or Ala in the P1' position. May play a role in the degradation of structural proteins in the extracellular matrix of cells located above sites of lateral root formation and thus facilitate lateral root emergence. This is Subtilisin-like protease SBT5.3 (AIR3) from Arabidopsis thaliana (Mouse-ear cress).